Reading from the N-terminus, the 485-residue chain is Zinc finger SWIM domain-containing protein 1 (485 aa).

The SWIM-type zinc-finger motif lies at 363-405; the sequence is MNIQILEDTHKVQPQPPASCSCYFNQAFHLPCRHILAMLSARR.

The polypeptide is Zinc finger SWIM domain-containing protein 1 (ZSWIM1) (Homo sapiens (Human)).